A 157-amino-acid polypeptide reads, in one-letter code: uncharacterized protein (157 aa).

An HD domain is found at 33 to 134; that stretch reads NLKHFLDVAR…MYRADKLSRL (102 aa).

This is an uncharacterized protein from Clostridium beijerinckii (strain ATCC 51743 / NCIMB 8052) (Clostridium acetobutylicum).